The chain runs to 452 residues: Chloride/fluoride channel protein (452 aa).

Transmembrane regions (helical) follow at residues 23-43 (WLAL…LFLL), 57-77 (WVIW…HLIG), 97-117 (IVPL…HLFG), 160-180 (FASV…VLAI), 188-208 (LFPC…WGVV), 222-242 (LWSV…GLLF), 264-284 (PFAG…NHYI), 315-337 (VFTV…FYIG), 344-364 (LAPL…VAVF), and 386-408 (IAPL…GIYH).

This sequence belongs to the chloride channel (TC 2.A.49) family.

The protein resides in the cell membrane. Transports chloride and fluoride with similar efficiency. In Pseudomonas syringae pv. tomato (strain ATCC BAA-871 / DC3000), this protein is Chloride/fluoride channel protein (eriC).